The sequence spans 438 residues: Glutaryl-CoA dehydrogenase, mitochondrial (438 aa).

The transit peptide at 1–44 (MALRGVSVRLLSRGPGLHVLRTWVSSAAQTEKGGRTQSQLAKSS) directs the protein to the mitochondrion. Residues 138–139 (RS) and S186 contribute to the substrate site. Residues 177–186 (FGLTEPNSGS) and 212–214 (WIT) each bind FAD. At K240 the chain carries N6-acetyllysine. 287 to 294 (FGCLNNAR) serves as a coordination point for substrate. Residues R319, Q330, and 387 to 391 (DMLGG) each bind FAD. The Proton acceptor role is filled by E414. Residue G415 participates in substrate binding. Residues 416–418 (THD) and F434 contribute to the FAD site.

The protein belongs to the acyl-CoA dehydrogenase family. Homotetramer. It depends on FAD as a cofactor. Isoform Long and isoform Short are expressed in fibroblasts and liver.

Its subcellular location is the mitochondrion matrix. The catalysed reaction is glutaryl-CoA + oxidized [electron-transfer flavoprotein] + 2 H(+) = (2E)-butenoyl-CoA + reduced [electron-transfer flavoprotein] + CO2. It functions in the pathway amino-acid metabolism; lysine degradation. Its pathway is amino-acid metabolism; tryptophan metabolism. Strongly inhibited by MCPA-CoA, a metabolite of hypoglycin which is present in unripened fruit of the ackee tree. In terms of biological role, catalyzes the oxidative decarboxylation of glutaryl-CoA to crotonyl-CoA and CO(2) in the degradative pathway of L-lysine, L-hydroxylysine, and L-tryptophan metabolism. It uses electron transfer flavoprotein as its electron acceptor. Isoform Short is inactive. The protein is Glutaryl-CoA dehydrogenase, mitochondrial (GCDH) of Homo sapiens (Human).